An 870-amino-acid chain; its full sequence is Dynamin-2 (870 aa).

The 267-residue stretch at 28 to 294 folds into the Dynamin-type G domain; it reads HLDLPQIAVV…LTNHIRESLP (267 aa). Positions 38–45 are G1 motif; sequence GGQSAGKS. S41, G43, K44, S45, S46, R59, and G60 together coordinate GDP. The interval 64–66 is G2 motif; that stretch reads VTR. The tract at residues 136–139 is G3 motif; the sequence is DLPG. Positions 205–208 are G4 motif; sequence TKLD. The GDP site is built by K206, D208, and D211. Y231 is modified (phosphotyrosine). Residues 235 to 238 form a G5 motif region; sequence VNRS. Residues N236, R237, and Q239 each contribute to the GDP site. The residue at position 299 (K299) is an N6-acetyllysine. One can recognise a PH domain in the interval 519 to 625; the sequence is LVIRRGWLTI…WKASFLRAGV (107 aa). Y597 carries the post-translational modification Phosphotyrosine. Position 598 is an N6-acetyllysine (K598). The region spanning 653–744 is the GED domain; that stretch reads VETIRNLVDS…IIGDISTSTV (92 aa). A disordered region spans residues 741 to 870; sequence TSTVSTPVPP…IRPAEPSLLD (130 aa). The residue at position 755 (T755) is a Phosphothreonine. A compositionally biased stretch (polar residues) spans 756–767; the sequence is WLQNTSGHSPTP. Position 764 is a phosphoserine; by CDK1 (S764). The segment covering 826–846 has biased composition (pro residues); the sequence is SAPPQIPSRPARIPPGIPPGV. The span at 847-864 shows a compositional bias: low complexity; sequence PSRRAPAAPSRPTIIRPA.

Belongs to the TRAFAC class dynamin-like GTPase superfamily. Dynamin/Fzo/YdjA family. In terms of assembly, oligomerizes into a helical polymer that self-assembles around the vesicle membrane, when associated to the menbrane through lipid binding. Interacts with SHANK1 and SHANK2. Interacts with SNX9. Interacts (via C-terminal proline-rich domain (PRD)) with SNX18 (via SH3 domain); this interaction regulates ATG9A and ATG16L1 trafficking from recycling endosomes to sites of autophagosome formation. Interacts with SNX33 (via SH3 domain). Interacts with MYO1E (via SH3 domain). Interacts with PSTPIP1 (via SH3 domain). Interacts with CTNND2. Interacts (via C-terminal proline-rich domain (PRD)) with BIN1 (via SH3 domain); this interaction allows the recruitment of DNM2 to the membrane tubules and inhibits self-assembly-stimulated GTPase activity on the membrane. Interacts with GABARAP, GABARAPL1 and GABARAPL2. Interacts with MAP1LC3B (the lipidate and non-lipidated LC3 form); this interaction mediates recycling endosome scission leading to autophagosome release. Interacts with ITSN1. Interacts (via C-terminal proline-rich domain (PRD)) with SH3BP4 (via SH3 domain); this interaction controls the GTPase activity and is prevented by EGFR-induced tyrosine phosphorylation of either DNM2 or SH3BP4. Interacts with MYOF. May interact with PIK3C3. May be a component of a complex composed of RAB5A (in GDP-bound form), DYN2 and PIK3C3. Interacts with SDC4; this interaction is markedly enhanced at focal ahesion site upon induction of focal adhesions and stress-fiber formation. Interacts with ACTN1. Interacts with CTTN; this interaction stimulates the intrinsic GTPase activity of DNM2 and stabilizes the association of DNM2 and actin filaments; in addition this interaction is stimulated by ligand binding to the receptor, leading to the recruitment of the DNM2-CTTN complex to the sequestered receptor-ligand complex to its internalization. Interacts with NOSTRIN (via SH3 domain); this interaction allows the recruitment of NOS3 to dynamin-positive structures. Interacts with TUBG1; this interaction may participate in centrosome cohesion. Phosphorylation at Ser-848 by GSK3-alpha relieves the inhibition of BIN1 and promotes endocytosis. Phosphorylation at Ser-764 by CDK1 is greatly increased upon mitotic entry. It regulates cytokinesis downstream of calcineurin, and does not affect clathrin-mediated endocytosis. Dephosphorylated by calcineurin/PP2 during cytokinesis in a Ca(2+)- and calmodulin-dependent manner. Phosphorylated on tyrosine residues by EGFR. Phosphorylated on tyrosine residues after activation of SRC. In terms of tissue distribution, expressed in most tissues during embryonic development, including the peripheral nervous system although no expression is evident in skeletal muscle or heart.

The protein resides in the cytoplasm. The protein localises to the cytoskeleton. Its subcellular location is the cytoplasmic vesicle. It localises to the clathrin-coated vesicle. It is found in the cell projection. The protein resides in the uropodium. The protein localises to the endosome. Its subcellular location is the microtubule organizing center. It localises to the centrosome. It is found in the centriole. The protein resides in the recycling endosome. The protein localises to the phagocytic cup. Its subcellular location is the phagosome membrane. It localises to the podosome. It is found in the cell junction. The protein resides in the postsynaptic density. The protein localises to the synapse. Its subcellular location is the synaptosome. It localises to the midbody. It is found in the membrane. The protein resides in the clathrin-coated pit. It catalyses the reaction GTP + H2O = GDP + phosphate + H(+). In terms of biological role, catalyzes the hydrolysis of GTP and utilizes this energy to mediate vesicle scission at plasma membrane during endocytosis and filament remodeling at many actin structures during organization of the actin cytoskeleton. Plays an important role in vesicular trafficking processes, namely clathrin-mediated endocytosis (CME), exocytic and clathrin-coated vesicle from the trans-Golgi network, and PDGF stimulated macropinocytosis. During vesicular trafficking process, associates to the membrane, through lipid binding, and self-assembles into ring-like structure through oligomerization to form a helical polymer around the vesicle membrane and leading to vesicle scission. Plays a role in organization of the actin cytoskeleton by mediating arrangement of stress fibers and actin bundles in podocytes. During organization of the actin cytoskeleton, self-assembles into ring-like structure that directly bundles actin filaments to form typical membrane tubules decorated with dynamin spiral polymers. Self-assembly increases GTPase activity and the GTP hydrolysis causes the rapid depolymerization of dynamin spiral polymers, and results in dispersion of actin bundles. Remodels, through its interaction with CTTN, bundled actin filaments in a GTPase-dependent manner and plays a role in orchestrating the global actomyosin cytoskeleton. The interaction with CTTN stabilizes the interaction of DNM2 and actin filaments and stimulates the intrinsic GTPase activity that results in actin filament-barbed ends and increases the sensitivity of filaments in bundles to the actin depolymerizing factor, CFL1. Plays a role in the autophagy process, by participating in the formation of ATG9A vesicles destined for the autophagosomes through its interaction with SNX18, by mediating recycling endosome scission leading to autophagosome release through MAP1LC3B interaction. Also regulates maturation of apoptotic cell corpse-containing phagosomes by recruiting PIK3C3 to the phagosome membrane. Also plays a role in cytokinesis. May participate in centrosome cohesion through its interaction with TUBG1. Plays a role in the regulation of neuron morphology, axon growth and formation of neuronal growth cones. Involved in membrane tubulation. This is Dynamin-2 from Mus musculus (Mouse).